A 204-amino-acid chain; its full sequence is Probable nicotinate-nucleotide adenylyltransferase (204 aa).

The protein belongs to the NadD family.

It carries out the reaction nicotinate beta-D-ribonucleotide + ATP + H(+) = deamido-NAD(+) + diphosphate. Its pathway is cofactor biosynthesis; NAD(+) biosynthesis; deamido-NAD(+) from nicotinate D-ribonucleotide: step 1/1. Its function is as follows. Catalyzes the reversible adenylation of nicotinate mononucleotide (NaMN) to nicotinic acid adenine dinucleotide (NaAD). The protein is Probable nicotinate-nucleotide adenylyltransferase of Clostridium beijerinckii (strain ATCC 51743 / NCIMB 8052) (Clostridium acetobutylicum).